The chain runs to 375 residues: Ribonuclease D (375 aa).

The 3'-5' exonuclease domain maps to 3-169 (YQMITTDDAL…LPITAKLMVE (167 aa)). The HRDC domain occupies 210–289 (RTRQLACLQL…EKAQTLPEDA (80 aa)).

The protein belongs to the RNase D family. The cofactor is a divalent metal cation.

It localises to the cytoplasm. It catalyses the reaction Exonucleolytic cleavage that removes extra residues from the 3'-terminus of tRNA to produce 5'-mononucleotides.. Functionally, exonuclease involved in the 3' processing of various precursor tRNAs. Initiates hydrolysis at the 3'-terminus of an RNA molecule and releases 5'-mononucleotides. This chain is Ribonuclease D, found in Escherichia coli (strain K12).